The following is a 48-amino-acid chain: Photosystem II reaction center protein K (48 aa).

Positions 1–11 are excised as a propeptide; sequence MFLFNLEQSIG. A helical transmembrane segment spans residues 23-43; the sequence is LVDVLPIIPLLFLLLAFVWQA.

The protein belongs to the PsbK family. PSII is composed of 1 copy each of membrane proteins PsbA, PsbB, PsbC, PsbD, PsbE, PsbF, PsbH, PsbI, PsbJ, PsbK, PsbL, PsbM, PsbT, PsbX, PsbY, PsbZ, Psb30/Ycf12, at least 3 peripheral proteins of the oxygen-evolving complex and a large number of cofactors. It forms dimeric complexes.

Its subcellular location is the plastid. It localises to the chloroplast thylakoid membrane. Functionally, one of the components of the core complex of photosystem II (PSII). PSII is a light-driven water:plastoquinone oxidoreductase that uses light energy to abstract electrons from H(2)O, generating O(2) and a proton gradient subsequently used for ATP formation. It consists of a core antenna complex that captures photons, and an electron transfer chain that converts photonic excitation into a charge separation. This is Photosystem II reaction center protein K from Lepocinclis buetschlii.